The chain runs to 129 residues: Small ribosomal subunit protein uS11 (129 aa).

The protein belongs to the universal ribosomal protein uS11 family. In terms of assembly, part of the 30S ribosomal subunit. Interacts with proteins S7 and S18. Binds to IF-3.

Located on the platform of the 30S subunit, it bridges several disparate RNA helices of the 16S rRNA. Forms part of the Shine-Dalgarno cleft in the 70S ribosome. The chain is Small ribosomal subunit protein uS11 from Beijerinckia indica subsp. indica (strain ATCC 9039 / DSM 1715 / NCIMB 8712).